Consider the following 179-residue polypeptide: uncharacterized protein (179 aa).

The protein resides in the plastid. The protein localises to the cyanelle. This is an uncharacterized protein from Cyanophora paradoxa.